A 224-amino-acid chain; its full sequence is Cysteine-rich hydrophobic domain-containing protein 1 (224 aa).

The tract at residues 1–80 (MSILLPNMAE…PPPRVVSEEH (80 aa)) is disordered. Positions 13–25 (TISELEEEEEEEA) are enriched in acidic residues. Residues 26-40 (ATSSSSPSSSSSVSG) are compositionally biased toward low complexity. Positions 41–69 (PDDDEEDEEEEEEEEEEEEEEEEEEEEEA) are enriched in acidic residues. The stretch at 42 to 70 (DDDEEDEEEEEEEEEEEEEEEEEEEEEAP) forms a coiled coil.

This sequence belongs to the CHIC family. In terms of processing, palmitoylated. In terms of tissue distribution, equally expressed in various parts of the brain.

The protein resides in the cell membrane. The protein localises to the cytoplasmic vesicle. This is Cysteine-rich hydrophobic domain-containing protein 1 (CHIC1) from Homo sapiens (Human).